Consider the following 427-residue polypeptide: ETS domain-containing protein Elk-1 (427 aa).

Residues 5–86 (VTLWQFLLQL…SGQKFVYKFV (82 aa)) constitute a DNA-binding region (ETS). Disordered stretches follow at residues 116–146 (ATVH…GLAR), 166–202 (LQPQ…SPNP), and 226–252 (PNQK…VEGP). Residues lysine 229, lysine 248, and lysine 253 each participate in a glycyl lysine isopeptide (Lys-Gly) (interchain with G-Cter in SUMO) cross-link. Over residues 300–310 (STSTTEITQPQ) the composition is skewed to polar residues. The interval 300–350 (STSTTEITQPQKGRKPRDLELPLSPSLLGGQGPERTPGSGTSSGLQAQGPA) is disordered. At serine 323 the chain carries Phosphoserine; by MAPK1. Phosphothreonine; by MAPK1 occurs at positions 335, 352, 362, and 367. The tract at residues 348–398 (GPALTPSLLPTHTLTPVLLTPSSLPPSIHFWSTLSPIAPRSPAKLSFQFPS) is sufficient for interaction with MAD2L2. Residue threonine 380 is glycosylated (O-linked (GlcNAc) threonine). Residue serine 382 is modified to Phosphoserine; by MAPK1 and MAPK8. Serine 388 is modified (phosphoserine; by MAPK1). At threonine 416 the chain carries Phosphothreonine; by MAPK1. Serine 421 bears the Phosphoserine; by MAPK1 mark.

Belongs to the ETS family. As to quaternary structure, interacts in its sumoylated form with PIAS2/PIASX which enhances its transcriptional activator activity. Interacts with MAD2L2; the interaction is direct and promotes phosphorylation by the kinases MAPK8 and/or MAPK9. Interacts with POU1F1. Sumoylation represses transcriptional activator activity as it results in recruitment of HDAC2 to target gene promoters which leads to decreased histone acetylation and reduced transactivator activity. It also regulates nuclear retention. In terms of processing, on mitogenic stimulation, phosphorylated on C-terminal serine and threonine residues by MAPK1. Ser-382 and Ser-388 are the preferred sites for MAPK1. In vitro, phosphorylation by MAPK1 potentiates ternary complex formation with the serum responses factors, SRE and SRF. Also phosphorylated on Ser-382 by MAPK8 and/or MAKP9. Phosphorylation leads to loss of sumoylation and restores transcriptional activator activity. Phosphorylated and activated by CAMK4, MAPK11, MAPK12 and MAPK14. Upon bFGF stimulus, phosphorylated by PAK1. Phosphorylated by PRP4K at Thr-416; phosphorylation activation ELK1 transcriptional activity.

Its subcellular location is the nucleus. Functionally, transcription factor that binds to purine-rich DNA sequences. Forms a ternary complex with SRF and the ETS and SRF motifs of the serum response element (SRE) on the promoter region of immediate early genes such as FOS and IER2. Induces target gene transcription upon JNK and MAPK-signaling pathways stimulation. This Rattus norvegicus (Rat) protein is ETS domain-containing protein Elk-1.